The primary structure comprises 155 residues: UPF0735 ACT domain-containing protein CA_C1234 (155 aa).

Positions 79–154 constitute an ACT domain; it reads TISILIEHRR…NVLKVEIVAM (76 aa).

This sequence belongs to the UPF0735 family.

In Clostridium acetobutylicum (strain ATCC 824 / DSM 792 / JCM 1419 / IAM 19013 / LMG 5710 / NBRC 13948 / NRRL B-527 / VKM B-1787 / 2291 / W), this protein is UPF0735 ACT domain-containing protein CA_C1234.